The primary structure comprises 352 residues: Anthranilate phosphoribosyltransferase (352 aa).

5-phospho-alpha-D-ribose 1-diphosphate-binding positions include Gly-83, 86 to 87, Thr-91, 93 to 96, 111 to 119, and Ala-123; these read GD, NIST, and KHGGRSVSS. Gly-83 contributes to the anthranilate binding site. Ser-95 provides a ligand contact to Mg(2+). Arg-169 is a binding site for anthranilate. 2 residues coordinate Mg(2+): Asp-228 and Glu-229.

It belongs to the anthranilate phosphoribosyltransferase family. Homodimer. Mg(2+) serves as cofactor.

The catalysed reaction is N-(5-phospho-beta-D-ribosyl)anthranilate + diphosphate = 5-phospho-alpha-D-ribose 1-diphosphate + anthranilate. The protein operates within amino-acid biosynthesis; L-tryptophan biosynthesis; L-tryptophan from chorismate: step 2/5. In terms of biological role, catalyzes the transfer of the phosphoribosyl group of 5-phosphorylribose-1-pyrophosphate (PRPP) to anthranilate to yield N-(5'-phosphoribosyl)-anthranilate (PRA). This chain is Anthranilate phosphoribosyltransferase, found in Neisseria meningitidis serogroup C (strain 053442).